We begin with the raw amino-acid sequence, 364 residues long: DNA-(apurinic or apyrimidinic site) endonuclease (364 aa).

Basic and acidic residues-rich tracts occupy residues 1–12 (MKRFFKPIEKEN) and 23–39 (PEKR…EKNQ). Residues 1 to 42 (MKRFFKPIEKENSPAAKKPCLSPEKRDGDGDGVEEEKNQNEP) form a disordered region. Mg(2+) is bound at residue E80. Y182 is a catalytic residue. 3 residues coordinate Mg(2+): D222, N224, and D342. D222 functions as the Proton donor/acceptor in the catalytic mechanism.

This sequence belongs to the DNA repair enzymes AP/exoA family. Interacts with ROS1. ROS1 is required for APE1L to stably associate with the DNA substrate. The cofactor is Mg(2+). Expressed in leaves, flower buds and developing siliques. Not detected in roots.

It localises to the nucleus. The protein resides in the nucleolus. Its function is as follows. Apurinic/apyrimidinic (AP) endonuclease involved in active DNA demethylation and gene imprinting. According to a report, also displays an in vitro 3'-phosphatase activity. According to another report, has no in vitro 3'-phosphatase activity. Catalyzes the conversion of the 3'-blocking groups 3'-phosphor-alpha,beta-unsaturated aldehyde (3'-PUA) generated by ROS1 to 3'-OH. Has a strong non-specific affinity to DNA. Redundant with APE2 and at least one functional allele is required for seed viability. The polypeptide is DNA-(apurinic or apyrimidinic site) endonuclease (Arabidopsis thaliana (Mouse-ear cress)).